Here is a 437-residue protein sequence, read N- to C-terminus: Interactor protein for cytohesin exchange factors 1 (437 aa).

The PH domain occupies 41–140; it reads HADCQGWLYK…WLNKLGSAVI (100 aa). 2 disordered regions span residues 143 to 225 and 273 to 307; these read ESTT…PDTV and LSSDDTSSLSSNHDHLTVPDKPAGSKIMDKEETKV. A compositionally biased stretch (acidic residues) spans 151–162; the sequence is CYSESEQEDPEI. The span at 172 to 200 shows a compositional bias: low complexity; sequence ASQTQSLTAQQASSSSPSLSGTSYSFSSL. Polar residues predominate over residues 201–214; the sequence is ENTVKTPSSFPSSL. Residues 273–283 are compositionally biased toward low complexity; that stretch reads LSSDDTSSLSS. 2 CRAC domain regions span residues 315–320 and 339–348; these read KLYKSL and LRKSFVKRCK. Residues 389–437 are required for interaction with CYTH2; the sequence is KYREWKVMNTLLIQDIYQQQRASPAPDDTDDTPQELKKSPSSPSVENSI. A disordered region spans residues 406–437; it reads QQQRASPAPDDTDDTPQELKKSPSSPSVENSI. Ser411 carries the phosphoserine modification. The span at 427–437 shows a compositional bias: polar residues; sequence SPSSPSVENSI.

In terms of assembly, interacts with guanine-nucleotide exchange factors PSCD1, PSCD2, PSCD3 and PSCD4. Interacts (via C-terminus) with cytohesin-2 CYTH2.

The protein localises to the cytoplasm. The protein resides in the cell membrane. Its function is as follows. Enhances the promotion of guanine-nucleotide exchange by PSCD2 on ARF6 in a concentration-dependent manner. This Homo sapiens (Human) protein is Interactor protein for cytohesin exchange factors 1 (IPCEF1).